We begin with the raw amino-acid sequence, 864 residues long: Seed linoleate 9S-lipoxygenase (864 aa).

Positions 44–171 (LGQGVSLVGG…SYKKNRIFFV (128 aa)) constitute a PLAT domain. One can recognise a Lipoxygenase domain in the interval 174–864 (TYLPSATPAP…FKGIPNSISI (691 aa)). Residues 244–264 (TGRERTRTDPNSEKPGEVYVP) form a disordered region. Residues H525, H530, H716, N720, and I864 each contribute to the Fe cation site.

Belongs to the lipoxygenase family. Monomer. Fe cation is required as a cofactor. As to expression, germinated cotyledons.

It is found in the cytoplasm. It catalyses the reaction (9Z,12Z)-octadecadienoate + O2 = (9S)-hydroperoxy-(10E,12Z)-octadecadienoate. It participates in lipid metabolism; oxylipin biosynthesis. In terms of biological role, plant lipoxygenase may be involved in a number of diverse aspects of plant physiology including growth and development, pest resistance, and senescence or responses to wounding. It catalyzes the hydroperoxidation of lipids containing a cis,cis-1,4-pentadiene structure. The protein is Seed linoleate 9S-lipoxygenase (LOX1.4) of Glycine max (Soybean).